The chain runs to 281 residues: Ribosomal RNA small subunit methyltransferase A (281 aa).

S-adenosyl-L-methionine is bound by residues Asn36, Leu38, Gly63, Glu84, Asp109, and Asn127.

This sequence belongs to the class I-like SAM-binding methyltransferase superfamily. rRNA adenine N(6)-methyltransferase family. RsmA subfamily.

It localises to the cytoplasm. It carries out the reaction adenosine(1518)/adenosine(1519) in 16S rRNA + 4 S-adenosyl-L-methionine = N(6)-dimethyladenosine(1518)/N(6)-dimethyladenosine(1519) in 16S rRNA + 4 S-adenosyl-L-homocysteine + 4 H(+). In terms of biological role, specifically dimethylates two adjacent adenosines (A1518 and A1519) in the loop of a conserved hairpin near the 3'-end of 16S rRNA in the 30S particle. May play a critical role in biogenesis of 30S subunits. This chain is Ribosomal RNA small subunit methyltransferase A, found in Borreliella afzelii (strain PKo) (Borrelia afzelii).